The following is a 439-amino-acid chain: NAD kinase (439 aa).

Phosphoserine is present on residues serine 46, serine 48, serine 50, serine 55, and serine 64.

It belongs to the NAD kinase family. Requires a divalent metal cation as cofactor.

The enzyme catalyses NAD(+) + ATP = ADP + NADP(+) + H(+). The polypeptide is NAD kinase (Nadk) (Mus musculus (Mouse)).